The chain runs to 554 residues: Bifunctional epoxide hydrolase 2 (554 aa).

A phosphatase region spans residues methionine 1–alanine 224. Mg(2+) contacts are provided by aspartate 9 and aspartate 11. The residue at position 55 (lysine 55) is an N6-succinyllysine. Threonine 123–asparagine 124 is a phosphate binding site. Lysine 176 carries the N6-acetyllysine; alternate modification. Lysine 176 bears the N6-succinyllysine; alternate mark. A Mg(2+)-binding site is contributed by aspartate 185. N6-acetyllysine occurs at positions 191 and 215. The segment at asparagine 233 to isoleucine 554 is epoxide hydrolase. The AB hydrolase-1 domain maps to proline 257 to proline 530. Aspartate 333 acts as the Nucleophile in catalysis. Residue serine 368 is modified to Phosphoserine. At lysine 371 the chain carries N6-succinyllysine. Tyrosine 381 contacts substrate. An N6-succinyllysine mark is found at lysine 420 and lysine 454. The active-site Proton donor is the tyrosine 465. Lysine 504 carries the post-translational modification N6-succinyllysine. Lysine 508 bears the N6-acetyllysine; alternate mark. Lysine 508 carries the post-translational modification N6-succinyllysine; alternate. A lipid anchor (S-(15-deoxy-Delta12,14-prostaglandin J2-9-yl)cysteine) is attached at cysteine 521. Catalysis depends on histidine 523, which acts as the Proton acceptor. The short motif at serine 552–isoleucine 554 is the Microbody targeting signal element. Lysine 553 is subject to N6-succinyllysine.

It belongs to the AB hydrolase superfamily. Epoxide hydrolase family. In terms of assembly, homodimer. Mg(2+) is required as a cofactor. The N-terminus is blocked. Post-translationally, the covalent modification of cysteine by 15-deoxy-Delta12,14-prostaglandin-J2 is autocatalytic and reversible. It may occur as an alternative to other cysteine modifications, such as S-nitrosylation and S-palmitoylation. Detected in liver, intestine, ovary and kidney. Detected at low levels in heart and muscle.

Its subcellular location is the cytoplasm. It localises to the peroxisome. It catalyses the reaction an epoxide + H2O = an ethanediol. The enzyme catalyses (9S,10S)-10-hydroxy-9-(phosphooxy)octadecanoate + H2O = (9S,10S)-9,10-dihydroxyoctadecanoate + phosphate. The catalysed reaction is 8-hydroxy-(11S,12S)-epoxy-(5Z,9E,14Z)-eicosatrienoate + H2O = (8,11R,12S)-trihydroxy-(5Z,9E,14Z)-eicosatrienoate. It carries out the reaction 10-hydroxy-(11S,12S)-epoxy- (5Z,8Z,14Z)-eicosatrienoate + H2O = (10,11S,12R)-trihydroxy-(5Z,8Z,14Z)-eicosatrienoate. It catalyses the reaction (8S,9R)-epoxy-(5Z,11Z,14Z)-eicosatrienoate + H2O = (8S,9S)-dihydroxy-(5Z,11Z,14Z)-eicosatrienoate. The enzyme catalyses (11S,12R)-epoxy-(5Z,8Z,14Z)-eicosatrienoate + H2O = (11R,12R)-dihydroxy-(5Z,8Z,14Z)-eicosatrienoate. The catalysed reaction is (11S,12R)-epoxy-(5Z,8Z,14Z)-eicosatrienoate + H2O = (11S,12S)-dihydroxy-(5Z,8Z,14Z)-eicosatrienoate. It carries out the reaction (14S,15R)-epoxy-(5Z,8Z,11Z)-eicosatrienoate + H2O = (14R,15R)-dihydroxy-(5Z,8Z,11Z)-eicosatrienoate. It catalyses the reaction (14S,15R)-epoxy-(5Z,8Z,11Z)-eicosatrienoate + H2O = (14S,15S)-dihydroxy-(5Z,8Z,11Z)-eicosatrienoate. The enzyme catalyses (11R,12S)-epoxy-(5Z,8Z,14Z)-eicosatrienoate + H2O = (11S,12S)-dihydroxy-(5Z,8Z,14Z)-eicosatrienoate. The catalysed reaction is (11R,12S)-epoxy-(5Z,8Z,14Z)-eicosatrienoate + H2O = (11R,12R)-dihydroxy-(5Z,8Z,14Z)-eicosatrienoate. It carries out the reaction (8S,9R)-epoxy-(5Z,11Z,14Z)-eicosatrienoate + H2O = (8R,9R)-dihydroxy-(5Z,11Z,14Z)-eicosatrienoate. It catalyses the reaction 12-phosphooxy-(9Z)-octadecenoate + H2O = 12-hydroxy-(9Z)-octadecenoate + phosphate. The enzyme catalyses 12-phosphooxy-(9E)-octadecenoate + H2O = 12-hydroxy-(9E)-octadecenoate + phosphate. The catalysed reaction is 12-(phosphooxy)octadecanoate + H2O = 12-hydroxyoctadecanoate + phosphate. It carries out the reaction 8,9-epoxy-(5Z,11Z,14Z)-eicosatrienoate + H2O = 8,9-dihydroxy-(5Z,11Z,14Z)-eicosatrienoate. It catalyses the reaction 11,12-epoxy-(5Z,8Z,14Z)-eicosatrienoate + H2O = 11,12-dihydroxy-(5Z,8Z,14Z)-eicosatrienoate. The enzyme catalyses 14,15-epoxy-(5Z,8Z,11Z)-eicosatrienoate + H2O = 14,15-dihydroxy-(5Z,8Z,11Z)-eicosatrienoate. The catalysed reaction is 9,10-epoxy-(12Z)-octadecenoate + H2O = 9,10-dihydroxy-(12Z)-octadecenoate. It carries out the reaction 1-tetradecanoyl-sn-glycerol 3-phosphate + H2O = 1-tetradecanoyl-sn-glycerol + phosphate. It catalyses the reaction 1-octadecanoyl-sn-glycero-3-phosphate + H2O = 1-octadecanoyl-sn-glycerol + phosphate. The enzyme catalyses 1-(5Z,8Z,11Z,14Z-eicosatetraenoyl)-sn-glycero-3-phosphate + H2O = 1-(5Z,8Z,11Z,14Z-eicosatetraenoyl)-sn-glycerol + phosphate. The catalysed reaction is 1-hexadecanoyl-sn-glycero-3-phosphate + H2O = 1-hexadecanoyl-sn-glycerol + phosphate. It carries out the reaction 1-(9Z-octadecenoyl)-sn-glycero-3-phosphate + H2O = 1-(9Z-octadecenoyl)-sn-glycerol + phosphate. It catalyses the reaction (14R,15S)-epoxy-(5Z,8Z,11Z)-eicosatrienoate + H2O = (14R,15R)-dihydroxy-(5Z,8Z,11Z)-eicosatrienoate. With respect to regulation, inhibited by 1-(1-acetylpiperidin-4-yl)-3-(4-(trifl uoromethoxy)phenyl)urea (TPAU), 1-cyclohexyl-3-dodecylurea (CDU), 12-(3-adamantan-1-yl-ureido)-dodecanoic acid (AUDA), 1-((3S, 5S, 7S)-adamantan-1-yl)-3-(5-(2-(2-ethoxyethoxy) ethoxy)pentyl)urea (AEPU), N-adamantyl-N[']-cyclohexyl urea (ACU), 4-(((1S, 4S)-4-(3-((3S, 5S, 7S)-adamantan-1-yl) ureido)cyclohexyl)oxy)benzoic acid (c-AUCB), 4-(((1R, 4R)-4-(3-((3S, 5S, 7S)-adamantan-1-yl)ureido)cyclohexyl)oxy)benzoic acid (t-AUCB), 4-(((1R, 4R)-4-(3-(4(trifluoromethoxy)phenyl)ureido)cyclohexyl)oxy)benzoic acid (t-TAUCB) and to a lesser extent by 8-(3-((3S, 5S, 7S)-adamantan-1-yl)ureido) octanoic acid (AUOA). Phosphatase activity is inhibited by dodecyl-phosphate, phospholipids such as phospho-lysophosphatidic acids and fatty acids such as palmitic acid and lauric acid. In terms of biological role, bifunctional enzyme. The C-terminal domain has epoxide hydrolase activity and acts on epoxides (alkene oxides, oxiranes) and arene oxides. Plays a role in xenobiotic metabolism by degrading potentially toxic epoxides. Also determines steady-state levels of physiological mediators. Bifunctional enzyme. The N-terminal domain has lipid phosphatase activity, with the highest activity towards threo-9,10-phosphonooxy-hydroxy-octadecanoic acid, followed by erythro-9,10-phosphonooxy-hydroxy-octadecanoic acid, 12-phosphonooxy-octadec-9Z-enoic acid and 12-phosphonooxy-octadec-9E-enoic acid. Has phosphatase activity toward lyso-glycerophospholipids with also some lower activity toward lysolipids of sphingolipid and isoprenoid phosphates. This is Bifunctional epoxide hydrolase 2 from Mus musculus (Mouse).